We begin with the raw amino-acid sequence, 240 residues long: Cilia- and flagella-associated protein 77 (240 aa).

This sequence belongs to the CFAP77 family.

The protein localises to the cytoplasm. The protein resides in the cytoskeleton. It localises to the cilium axoneme. Its subcellular location is the flagellum axoneme. Its function is as follows. Microtubule inner protein (MIP) part of the dynein-decorated doublet microtubules (DMTs) in cilia axoneme, which is required for motile cilia beating. This Danio rerio (Zebrafish) protein is Cilia- and flagella-associated protein 77.